A 91-amino-acid chain; its full sequence is Class I hydrophobin 3 (91 aa).

An N-terminal signal peptide occupies residues 1–17; the sequence is MLFRLFTIPSIALGVLG. 4 disulfides stabilise this stretch: Cys31-Cys70, Cys35-Cys61, Cys36-Cys53, and Cys71-Cys87.

It belongs to the fungal hydrophobin family. In terms of assembly, self-assembles to form functional amyloid fibrils called rodlets. Self-assembly into fibrillar rodlets occurs spontaneously at hydrophobic:hydrophilic interfaces and the rodlets further associate laterally to form amphipathic monolayers. In terms of tissue distribution, expressed in conidia.

The protein resides in the secreted. The protein localises to the cell wall. Aerial growth, conidiation, and dispersal of filamentous fungi in the environment rely upon a capability of their secreting small amphipathic proteins called hydrophobins (HPBs) with low sequence identity. Class I can self-assemble into an outermost layer of rodlet bundles on aerial cell surfaces, conferring cellular hydrophobicity that supports fungal growth, development and dispersal; whereas Class II form highly ordered films at water-air interfaces through intermolecular interactions but contribute nothing to the rodlet structure. HYD3 is a class I hydrophobin located on the conidial surface that activates specifically the humoral and cellular immunity of Metarhizium acridum's own host insect, Locusta migratoria manilensis (Meyen) but not that of other non-host insects. Improves the resistance of locusts to both specialist and generalist fungal pathogens (wide host range) when topically applied to the cuticle, but has no effect on the fungal resistance of other insects, including Spodoptera frugiperda and Galleria mellonella. This is Class I hydrophobin 3 from Metarhizium acridum (strain CQMa 102).